Reading from the N-terminus, the 252-residue chain is PF03932 family protein CutC (252 aa).

It belongs to the CutC family.

Its subcellular location is the cytoplasm. The polypeptide is PF03932 family protein CutC (Serratia proteamaculans (strain 568)).